A 601-amino-acid polypeptide reads, in one-letter code: Elongation factor 4 (601 aa).

The 183-residue stretch at 7–189 (SLIRNFSIIA…ALVTRLPPPV (183 aa)) folds into the tr-type G domain. GTP contacts are provided by residues 19 to 24 (DHGKST) and 136 to 139 (NKVD).

This sequence belongs to the TRAFAC class translation factor GTPase superfamily. Classic translation factor GTPase family. LepA subfamily.

Its subcellular location is the cell inner membrane. The enzyme catalyses GTP + H2O = GDP + phosphate + H(+). Required for accurate and efficient protein synthesis under certain stress conditions. May act as a fidelity factor of the translation reaction, by catalyzing a one-codon backward translocation of tRNAs on improperly translocated ribosomes. Back-translocation proceeds from a post-translocation (POST) complex to a pre-translocation (PRE) complex, thus giving elongation factor G a second chance to translocate the tRNAs correctly. Binds to ribosomes in a GTP-dependent manner. In Gluconacetobacter diazotrophicus (strain ATCC 49037 / DSM 5601 / CCUG 37298 / CIP 103539 / LMG 7603 / PAl5), this protein is Elongation factor 4.